Consider the following 748-residue polypeptide: E3 ubiquitin-protein ligase SMURF2 (748 aa).

The region spanning Met-1–Lys-119 is the C2 domain. Lys-119 participates in a covalent cross-link: Glycyl lysine isopeptide (Lys-Gly) (interchain with G-Cter in ubiquitin). 3 WW domains span residues Asn-157 to Arg-190, Pro-251 to Val-284, and Gly-297 to Leu-330. An HECT domain is found at Arg-414–Glu-748. Cys-716 (glycyl thioester intermediate) is an active-site residue.

As to quaternary structure, interacts (via WW domains) with SMAD1. Interacts (via WW domains) with SMAD2 (via PY-motif). Interacts (via WW domains) with SMAD3 (via PY-motif). Interacts with SMAD6. Interacts with SMAD7 (via PY-motif) and TGFBR1; SMAD7 recruits SMURF2 to the TGF-beta receptor and regulates its degradation. Does not interact with SMAD4; SMAD4 lacks a PY-motif. Interacts with AIMP1. Interacts with NDFIP1 and NDFIP2; this interaction activates the E3 ubiquitin-protein ligase. Interacts with TTC3. Auto-ubiquitinated and ubiquitinated in the presence of RNF11 and UBE2D1. Ubiquitinated by the SCF(FBXL15) complex and TTC3, leading to its degradation by the proteasome. 'Lys-48'-linked polyubiquitination mediated by TRAF4 at Lys-119 leads to SMURF2 proteasomal degradation.

The protein localises to the nucleus. The protein resides in the cytoplasm. It is found in the cell membrane. It localises to the membrane raft. It catalyses the reaction S-ubiquitinyl-[E2 ubiquitin-conjugating enzyme]-L-cysteine + [acceptor protein]-L-lysine = [E2 ubiquitin-conjugating enzyme]-L-cysteine + N(6)-ubiquitinyl-[acceptor protein]-L-lysine.. The protein operates within protein modification; protein ubiquitination. Activated by NDFIP1- and NDFIP2-binding. Functionally, E3 ubiquitin-protein ligase which accepts ubiquitin from an E2 ubiquitin-conjugating enzyme in the form of a thioester and then directly transfers the ubiquitin to targeted substrates. Interacts with SMAD7 to trigger SMAD7-mediated transforming growth factor beta/TGF-beta receptor ubiquitin-dependent degradation, thereby down-regulating TGF-beta signaling. In addition, interaction with SMAD7 activates autocatalytic degradation, which is prevented by interaction with AIMP1. Also forms a stable complex with TGF-beta receptor-mediated phosphorylated SMAD1, SMAD2 and SMAD3, and targets SMAD1 and SMAD2 for ubiquitination and proteasome-mediated degradation. SMAD2 may recruit substrates, such as SNON, for ubiquitin-dependent degradation. Negatively regulates TGFB1-induced epithelial-mesenchymal transition and myofibroblast differentiation. In Mus musculus (Mouse), this protein is E3 ubiquitin-protein ligase SMURF2.